Consider the following 236-residue polypeptide: 2-C-methyl-D-erythritol 4-phosphate cytidylyltransferase (236 aa).

This sequence belongs to the IspD/TarI cytidylyltransferase family. IspD subfamily. Homodimer.

The enzyme catalyses 2-C-methyl-D-erythritol 4-phosphate + CTP + H(+) = 4-CDP-2-C-methyl-D-erythritol + diphosphate. Its pathway is isoprenoid biosynthesis; isopentenyl diphosphate biosynthesis via DXP pathway; isopentenyl diphosphate from 1-deoxy-D-xylulose 5-phosphate: step 2/6. In terms of biological role, catalyzes the formation of 4-diphosphocytidyl-2-C-methyl-D-erythritol from CTP and 2-C-methyl-D-erythritol 4-phosphate (MEP). This Buchnera aphidicola subsp. Schizaphis graminum (strain Sg) protein is 2-C-methyl-D-erythritol 4-phosphate cytidylyltransferase.